The following is a 264-amino-acid chain: Ribosomal RNA small subunit methyltransferase A (264 aa).

S-adenosyl-L-methionine is bound by residues asparagine 15, isoleucine 17, glycine 42, glutamate 64, aspartate 90, and asparagine 109.

Belongs to the class I-like SAM-binding methyltransferase superfamily. rRNA adenine N(6)-methyltransferase family. RsmA subfamily.

Its subcellular location is the cytoplasm. It carries out the reaction adenosine(1518)/adenosine(1519) in 16S rRNA + 4 S-adenosyl-L-methionine = N(6)-dimethyladenosine(1518)/N(6)-dimethyladenosine(1519) in 16S rRNA + 4 S-adenosyl-L-homocysteine + 4 H(+). Specifically dimethylates two adjacent adenosines (A1518 and A1519) in the loop of a conserved hairpin near the 3'-end of 16S rRNA in the 30S particle. May play a critical role in biogenesis of 30S subunits. The polypeptide is Ribosomal RNA small subunit methyltransferase A (Wolbachia pipientis subsp. Culex pipiens (strain wPip)).